Consider the following 440-residue polypeptide: D-serine dehydratase (440 aa).

Residue K116 is modified to N6-(pyridoxal phosphate)lysine.

This sequence belongs to the serine/threonine dehydratase family. DsdA subfamily. As to quaternary structure, monomer. Pyridoxal 5'-phosphate is required as a cofactor.

The enzyme catalyses D-serine = pyruvate + NH4(+). The chain is D-serine dehydratase from Salmonella schwarzengrund (strain CVM19633).